Here is a 237-residue protein sequence, read N- to C-terminus: MLTRKQFELLRFINERLKEAGVPPSFDEMKDALDLRSKSGIHRLITALEERGFIRRLPNRARAIEVIKLPEFGINGGGQTRRGFTPSVIEGHLGKVRPHASIGSDEDSHDRNVAVPVMGRIAAGTPIEALQTRSHTISVPPDMLGSGEHYALEVRGDSMVDAGILDGDMALIQKNESADTGDIVVALIDEEEATLKRFRRRGASIALEPANSAYEVRILPPNRVRIQGKLVGLYRKY.

Positions 26–46 (FDEMKDALDLRSKSGIHRLIT) form a DNA-binding region, H-T-H motif. Catalysis depends on for autocatalytic cleavage activity residues S158 and K196.

This sequence belongs to the peptidase S24 family. As to quaternary structure, homodimer.

The enzyme catalyses Hydrolysis of Ala-|-Gly bond in repressor LexA.. Represses a number of genes involved in the response to DNA damage (SOS response), including recA and lexA. In the presence of single-stranded DNA, RecA interacts with LexA causing an autocatalytic cleavage which disrupts the DNA-binding part of LexA, leading to derepression of the SOS regulon and eventually DNA repair. This Rhodopseudomonas palustris (strain BisA53) protein is LexA repressor.